A 333-amino-acid polypeptide reads, in one-letter code: uncharacterized protein (333 aa).

The protein belongs to the polysaccharide synthase family.

This is an uncharacterized protein from Methanocaldococcus jannaschii (strain ATCC 43067 / DSM 2661 / JAL-1 / JCM 10045 / NBRC 100440) (Methanococcus jannaschii).